We begin with the raw amino-acid sequence, 183 residues long: MRGVLRGLAVVVEDVEFGRRLYKEGFYGRFLGYDKVKREEVDRINAPLVLALYEALYLVERGVLEVVTDSGEKITQTRLVELGREKLKNFDEIYKIYKYFRDLGYVVKSGLKFGALFSVYEKGPGIDHAPMVVVFLEPDKGISATDITRGGRLGHSVKKTFTLATVLKNTGEVILLGFSWARL.

Residues tyrosine 120, histidine 128, and lysine 159 contribute to the active site.

This sequence belongs to the tRNA-intron endonuclease family. Archaeal short subfamily. As to quaternary structure, homotetramer; although the tetramer contains four active sites, only two participate in the cleavage. Therefore, it should be considered as a dimer of dimers.

The enzyme catalyses pretRNA = a 3'-half-tRNA molecule with a 5'-OH end + a 5'-half-tRNA molecule with a 2',3'-cyclic phosphate end + an intron with a 2',3'-cyclic phosphate and a 5'-hydroxyl terminus.. Its function is as follows. Endonuclease that removes tRNA introns. Cleaves pre-tRNA at the 5'- and 3'-splice sites to release the intron. The products are an intron and two tRNA half-molecules bearing 2',3' cyclic phosphate and 5'-OH termini. Recognizes a pseudosymmetric substrate in which 2 bulged loops of 3 bases are separated by a stem of 4 bp. In Pyrobaculum arsenaticum (strain DSM 13514 / JCM 11321 / PZ6), this protein is tRNA-splicing endonuclease.